Reading from the N-terminus, the 236-residue chain is EEF1A lysine methyltransferase 2 (236 aa).

A compositionally biased stretch (gly residues) spans M1 to A11. The tract at residues M1–A31 is disordered. N-acetylserine is present on S2. S21 bears the Phosphoserine mark.

Belongs to the class I-like SAM-binding methyltransferase superfamily. EFM4 family.

It is found in the cytoplasm. Its subcellular location is the nucleus. It catalyses the reaction L-lysyl-[protein] + 3 S-adenosyl-L-methionine = N(6),N(6),N(6)-trimethyl-L-lysyl-[protein] + 3 S-adenosyl-L-homocysteine + 3 H(+). Its function is as follows. Protein-lysine methyltransferase that selectively catalyzes the trimethylation of EEF1A at 'Lys-318'. The sequence is that of EEF1A lysine methyltransferase 2 from Homo sapiens (Human).